A 334-amino-acid chain; its full sequence is Heat-inducible transcription repressor HrcA (334 aa).

Belongs to the HrcA family.

Its function is as follows. Negative regulator of class I heat shock genes (grpE-dnaK-dnaJ and groELS operons). Prevents heat-shock induction of these operons. The sequence is that of Heat-inducible transcription repressor HrcA from Acidovorax ebreus (strain TPSY) (Diaphorobacter sp. (strain TPSY)).